A 291-amino-acid chain; its full sequence is Flavonol synthase/flavanone 3-hydroxylase (291 aa).

The Fe2OG dioxygenase domain maps to 151-250; it reads CWYVMNINHY…RMSWPVLVSP (100 aa). Fe cation-binding residues include His-175, Asp-177, and His-231.

The protein belongs to the iron/ascorbate-dependent oxidoreductase family. Requires L-ascorbate as cofactor. Fe cation is required as a cofactor.

The protein localises to the cytoplasm. The catalysed reaction is a (2R,3R)-dihydroflavonol + 2-oxoglutarate + O2 = a flavonol + succinate + CO2 + H2O. It carries out the reaction a (2S)-flavan-4-one + 2-oxoglutarate + O2 = a (2R,3R)-dihydroflavonol + succinate + CO2. Its pathway is secondary metabolite biosynthesis; flavonoid biosynthesis. In terms of biological role, catalyzes the formation of flavonols from dihydroflavonols. It can act on dihydrokaempferol to produce kaempferol, on dihydroquercetin to produce quercitin and on dihydromyricetin to produce myricetin. This chain is Flavonol synthase/flavanone 3-hydroxylase, found in Matthiola incana (Common stock).